We begin with the raw amino-acid sequence, 251 residues long: L,D-transpeptidase 1 (251 aa).

A signal peptide spans 1–28 (MRRVVRYLSVVVAITLMLTAESVSIATA). Positions 125–250 (LIGVASISAH…VTVGDPIEVV (126 aa)) constitute a L,D-TPase catalytic domain. Residues Tyr190 and 203–204 (SG) contribute to the substrate site. The active-site Proton donor/acceptor is the His208. Catalysis depends on Cys226, which acts as the Nucleophile. Residue Asn228 coordinates substrate.

Monomer.

The protein resides in the periplasm. It participates in cell wall biogenesis; peptidoglycan biosynthesis. Is irreversibly inactivated by the beta-lactams carbapenems via the formation of a covalent adduct resulting from acylation of the catalytic Cys. Generates 3-&gt;3 cross-links in peptidoglycan, catalyzing the cleavage of the mDap(3)-D-Ala(4) bond of a tetrapeptide donor stem and the formation of a bond between the carbonyl of mDap(3) of the donor stem and the side chain of mDap(3) of the acceptor stem. Is specific for donor substrates containing a stem tetrapeptide since it cannot use pentapeptide stems. The chain is L,D-transpeptidase 1 (ldtA) from Mycobacterium tuberculosis (strain CDC 1551 / Oshkosh).